Consider the following 408-residue polypeptide: Histidine--tRNA ligase (408 aa).

This sequence belongs to the class-II aminoacyl-tRNA synthetase family. As to quaternary structure, homodimer.

It localises to the cytoplasm. It catalyses the reaction tRNA(His) + L-histidine + ATP = L-histidyl-tRNA(His) + AMP + diphosphate + H(+). This is Histidine--tRNA ligase from Campylobacter jejuni subsp. doylei (strain ATCC BAA-1458 / RM4099 / 269.97).